A 237-amino-acid polypeptide reads, in one-letter code: Ubiquinone biosynthesis O-methyltransferase (237 aa).

S-adenosyl-L-methionine contacts are provided by Arg38, Gly58, Asp79, and Met124.

This sequence belongs to the methyltransferase superfamily. UbiG/COQ3 family.

The enzyme catalyses a 3-demethylubiquinol + S-adenosyl-L-methionine = a ubiquinol + S-adenosyl-L-homocysteine + H(+). It carries out the reaction a 3-(all-trans-polyprenyl)benzene-1,2-diol + S-adenosyl-L-methionine = a 2-methoxy-6-(all-trans-polyprenyl)phenol + S-adenosyl-L-homocysteine + H(+). It participates in cofactor biosynthesis; ubiquinone biosynthesis. O-methyltransferase that catalyzes the 2 O-methylation steps in the ubiquinone biosynthetic pathway. The polypeptide is Ubiquinone biosynthesis O-methyltransferase (Acinetobacter baumannii (strain AB307-0294)).